Consider the following 252-residue polypeptide: Probable transcriptional regulatory protein A1C_04175 (252 aa).

The protein belongs to the TACO1 family.

The protein localises to the cytoplasm. The chain is Probable transcriptional regulatory protein A1C_04175 from Rickettsia akari (strain Hartford).